The following is a 252-amino-acid chain: Hydroxyacylglutathione hydrolase (252 aa).

His54, His56, Asp58, His59, His111, Asp130, and His170 together coordinate Zn(2+).

This sequence belongs to the metallo-beta-lactamase superfamily. Glyoxalase II family. As to quaternary structure, monomer. Zn(2+) serves as cofactor.

The catalysed reaction is an S-(2-hydroxyacyl)glutathione + H2O = a 2-hydroxy carboxylate + glutathione + H(+). The protein operates within secondary metabolite metabolism; methylglyoxal degradation; (R)-lactate from methylglyoxal: step 2/2. In terms of biological role, thiolesterase that catalyzes the hydrolysis of S-D-lactoyl-glutathione to form glutathione and D-lactic acid. This Francisella tularensis subsp. tularensis (strain FSC 198) protein is Hydroxyacylglutathione hydrolase.